Here is a 101-residue protein sequence, read N- to C-terminus: Small ribosomal subunit protein uS14 (101 aa).

It belongs to the universal ribosomal protein uS14 family. As to quaternary structure, part of the 30S ribosomal subunit. Contacts proteins S3 and S10.

Binds 16S rRNA, required for the assembly of 30S particles and may also be responsible for determining the conformation of the 16S rRNA at the A site. The protein is Small ribosomal subunit protein uS14 of Ehrlichia ruminantium (strain Welgevonden).